An 877-amino-acid polypeptide reads, in one-letter code: Dystroglycan 1 (877 aa).

Residues 1-29 form the signal peptide; the sequence is MRMSAGLSLLIPLWGRTFLLLLSVAVTQS. Residues 30-408 form a required for laminin recognition region; it reads RWPSEPSDAV…GHIRPTMTIP (379 aa). Positions 49 to 71 are O-glycosylated at one site; that stretch reads SMHSVLSDLHEAVPTVVGIPDGT. N-linked (GlcNAc...) asparagine glycosylation occurs at asparagine 141. Cysteine 182 and cysteine 264 are disulfide-bonded. The tract at residues 316–468 is mucin-like domain; it reads ATPTPVTAIG…PPTRIRTTTS (153 aa). O-linked (Man6P...) threonine glycosylation is found at threonine 317, threonine 319, and threonine 379. Disordered stretches follow at residues 380-444 and 458-480; these read PTLG…PVPR and SPPTRIRTTTSGLPRGEPNQRPE. Positions 413-433 are enriched in low complexity; sequence PTAVATPPTPTTKNPRVSXPT. The O-glycosylated at seven sites with GalNAc stretch occupies residues 446–468; that stretch reads TTKAPITRLETASPPTRIRTTTS. One can recognise a Peptidase S72 domain in the interval 585-694; the sequence is RAPARFTAKF…MSIAVTGSGS (110 aa). 3 N-linked (GlcNAc...) asparagine glycosylation sites follow: asparagine 623, asparagine 631, and asparagine 643. An intrachain disulfide couples cysteine 651 to cysteine 695. Positions 706–717 are enriched in pro residues; that stretch reads PKRVPSEAPPTE. Residues 706-727 form a disordered region; sequence PKRVPSEAPPTEVPDRDPEKSS. A compositionally biased stretch (basic and acidic residues) spans 718–727; it reads VPDRDPEKSS. The helical transmembrane segment at 732-757 threads the bilayer; that stretch reads YLHTVIPAVVVAAILLIAGIIAMICY. Residues 758–764 carry the Nuclear localization signal motif; it reads RKKRKGK. Threonine 772 is modified (phosphothreonine). The required for interaction with CAV3 stretch occupies residues 801 to 877; sequence LQEEKAPLPP…YRSPPPYVPP (77 aa). The disordered stretch occupies residues 805–877; that stretch reads KAPLPPPEYP…YRSPPPYVPP (73 aa). Residues 814 to 828 are compositionally biased toward polar residues; it reads PNQSVPETTPLNQDT. Residues 841-852 show a composition bias toward pro residues; that stretch reads NAPPYQPPPPFT. The tract at residues 862 to 877 is required for binding DMD and UTRN; sequence PKNMTPYRSPPPYVPP. A PPXY motif motif is present at residues 871-874; sequence PPPY. Tyrosine 874 is subject to Phosphotyrosine; by SRC.

As to quaternary structure, monomer. Heterodimer of alpha- and beta-dystroglycan subunits which are the central components of the dystrophin-glycoprotein complex. This complex then can form a dystrophin-associated glycoprotein complex (DGC) which is composed of three subcomplexes: a cytoplasmic complex comprised of DMD (or UTRN), DTNA and a number of syntrophins, such as SNTB1, SNTB2, SNTG1 and SNTG2, the transmembrane dystroglycan complex, and the sarcoglycan-sarcospan complex. Interacts (via the N-terminal of alphaDAG1) with LARGE1; the interaction enhances laminin binding. Interacts with SGCD. Interacts with AGR2 and AGR3. Interacts (betaDAG1) with DMD; the interaction is inhibited by phosphorylation on the PPXY motif. Interacts (betaDAG1, via its PPXY motif) with UTRN (via its WWW and ZZ domains); the interaction is inhibited by phosphorylation on the PPXY motif. Interacts (betaDAG1, via its phosphorylated PPXY motif) with the SH2 domain-containing proteins, FYN, CSK, NCK and SHC. Interacts (betaDAG1) with CAV3 (via a central WW-like domain); the interaction disrupts the binding of DMD. BetaDAG1 directly interacts with ANK3, but not with ANK2; this interaction does not interfere with DMD-binding and is required for retention at costameres. Identified in a dystroglycan complex that contains at least PRX, DRP2, UTRN, DMD and DAG1. Interacts with POMGNT1. BetaDAG1 interacts with CD93. O-glycosylated. POMGNT1 catalyzes the initial addition of N-acetylglucosamine, giving rise to the GlcNAc(beta1-2)Man(alpha1-)O-Ser/Thr moiety and thus providing the necessary basis for the addition of further carbohydrate moieties. Heavily O-glycosylated comprising of up to two thirds of its mass and the carbohydrate composition differs depending on tissue type. Mucin-type O-glycosylation is important for ligand binding activity. O-mannosylation of alpha-DAG1 is found in high abundance in both brain and muscle where the most abundant glycan is Sia-alpha-2-3-Gal-beta-1-4-Glc-NAc-beta-1-2-Man. In muscle, glycosylation on Thr-317, Thr-319 and Thr-379 by a phosphorylated O-mannosyl glycan with the structure 2-(N-acetylamido)-2-deoxygalactosyl-beta-1,3-2-(N-acetylamido)-2-deoxyglucosyl-beta-1,4-6-phosphomannose is mediated by like-acetylglucosaminyltransferase (LARGE1) protein amd is required for laminin binding. O-glycosylated in the N-terminal region with a core 1 or possibly core 8 glycan. The brain form displays a unique glycosylation pattern which is absent in other tissues; this form shows enhanced binding to laminin LAMA5 compared to the skeletal muscle form. In terms of processing, N-glycosylated. Post-translationally, autolytic cleavage produces the alpha and beta subunits. In cutaneous cells, as well as in certain pathological conditions, shedding of beta-dystroglycan can occur releasing a peptide of about 30 kDa. SRC-mediated phosphorylation of the PPXY motif of the beta subunit recruits SH2 domain-containing proteins, but inhibits binding to WWW domain-containing proteins, DMD and UTRN. This phosphorylation also inhibits nuclear entry.

It localises to the secreted. The protein resides in the extracellular space. It is found in the cell membrane. Its subcellular location is the cytoplasm. The protein localises to the cytoskeleton. It localises to the nucleus. The protein resides in the nucleoplasm. It is found in the sarcolemma. Its subcellular location is the postsynaptic cell membrane. In terms of biological role, the dystroglycan complex is involved in a number of processes including laminin and basement membrane assembly, sarcolemmal stability, cell survival, peripheral nerve myelination, nodal structure, cell migration, and epithelial polarization. Extracellular peripheral glycoprotein that acts as a receptor for extracellular matrix proteins containing laminin-G domains. Receptor for laminin-2 (LAMA2) and agrin in peripheral nerve Schwann cells. Also acts as a receptor for laminin LAMA5. Its function is as follows. Transmembrane protein that plays important roles in connecting the extracellular matrix to the cytoskeleton. Acts as a cell adhesion receptor in both muscle and non-muscle tissues. Receptor for both DMD and UTRN and, through these interactions, scaffolds axin to the cytoskeleton. Also functions in cell adhesion-mediated signaling and implicated in cell polarity. The polypeptide is Dystroglycan 1 (Sus scrofa (Pig)).